The primary structure comprises 1179 residues: DNA-directed RNA polymerase subunit beta' (1179 aa).

Positions 60, 62, 75, and 78 each coordinate Zn(2+). Residues Asp449, Asp451, and Asp453 each contribute to the Mg(2+) site. Positions 796, 871, 878, and 881 each coordinate Zn(2+).

Belongs to the RNA polymerase beta' chain family. The RNAP catalytic core consists of 2 alpha, 1 beta, 1 beta' and 1 omega subunit. When a sigma factor is associated with the core the holoenzyme is formed, which can initiate transcription. Mg(2+) serves as cofactor. The cofactor is Zn(2+).

It catalyses the reaction RNA(n) + a ribonucleoside 5'-triphosphate = RNA(n+1) + diphosphate. DNA-dependent RNA polymerase catalyzes the transcription of DNA into RNA using the four ribonucleoside triphosphates as substrates. This Symbiobacterium thermophilum (strain DSM 24528 / JCM 14929 / IAM 14863 / T) protein is DNA-directed RNA polymerase subunit beta'.